The chain runs to 264 residues: SPRY domain-containing SOCS box protein 2 (264 aa).

Over residues 1 to 19 (MGQTALARGSSSTPTSQAL) the composition is skewed to polar residues. Residues 1–34 (MGQTALARGSSSTPTSQALYSDFSPPEGLEELLS) are disordered. A B30.2/SPRY domain is found at 26-221 (PEGLEELLSA…VRIRYMGERR (196 aa)). In terms of domain architecture, SOCS box spans 222–264 (VEEPQSLLHLSRLCVRHALGDTRLGQISTLPLPPAMKRYLLYK).

It belongs to the SPSB family. Component of the probable ECS(SPSB2) E3 ubiquitin-protein ligase complex which contains CUL5, RNF7/RBX2, Elongin BC complex and SPSB2. Interacts with CUL5, RNF7, ELOB and ELOC. Interacts with MET. Interacts (via B30.2/SPRY domain) with PAWR; this interaction occurs in association with the Elongin BC complex. Interacts with NOS2.

It is found in the cytoplasm. The protein localises to the cytosol. It functions in the pathway protein modification; protein ubiquitination. Functionally, substrate recognition component of a SCF-like ECS (Elongin BC-CUL2/5-SOCS-box protein) E3 ubiquitin-protein ligase complex which mediates the ubiquitination and subsequent proteasomal degradation of target proteins. Negatively regulates nitric oxide (NO) production and limits cellular toxicity in activated macrophages by mediating the ubiquitination and proteasomal degradation of NOS2. Acts as a bridge which links NOS2 with the ECS E3 ubiquitin ligase complex components ELOC and CUL5. The chain is SPRY domain-containing SOCS box protein 2 (Spsb2) from Mus musculus (Mouse).